The sequence spans 122 residues: LOB domain-containing protein 5 (122 aa).

In terms of domain architecture, LOB spans 8-109; sequence RPCSVCITKN…AYLRELQEKI (102 aa).

Belongs to the LOB domain-containing protein family.

The polypeptide is LOB domain-containing protein 5 (LBD5) (Arabidopsis thaliana (Mouse-ear cress)).